Here is a 210-residue protein sequence, read N- to C-terminus: Leucyl/phenylalanyl-tRNA--protein transferase (210 aa).

It belongs to the L/F-transferase family.

It localises to the cytoplasm. The catalysed reaction is N-terminal L-lysyl-[protein] + L-leucyl-tRNA(Leu) = N-terminal L-leucyl-L-lysyl-[protein] + tRNA(Leu) + H(+). It carries out the reaction N-terminal L-arginyl-[protein] + L-leucyl-tRNA(Leu) = N-terminal L-leucyl-L-arginyl-[protein] + tRNA(Leu) + H(+). The enzyme catalyses L-phenylalanyl-tRNA(Phe) + an N-terminal L-alpha-aminoacyl-[protein] = an N-terminal L-phenylalanyl-L-alpha-aminoacyl-[protein] + tRNA(Phe). Its function is as follows. Functions in the N-end rule pathway of protein degradation where it conjugates Leu, Phe and, less efficiently, Met from aminoacyl-tRNAs to the N-termini of proteins containing an N-terminal arginine or lysine. This chain is Leucyl/phenylalanyl-tRNA--protein transferase, found in Deinococcus radiodurans (strain ATCC 13939 / DSM 20539 / JCM 16871 / CCUG 27074 / LMG 4051 / NBRC 15346 / NCIMB 9279 / VKM B-1422 / R1).